Consider the following 127-residue polypeptide: DNA-directed RNA polymerase subunit omega (127 aa).

This sequence belongs to the RNA polymerase subunit omega family. The RNAP catalytic core consists of 2 alpha, 1 beta, 1 beta' and 1 omega subunit. When a sigma factor is associated with the core the holoenzyme is formed, which can initiate transcription.

The catalysed reaction is RNA(n) + a ribonucleoside 5'-triphosphate = RNA(n+1) + diphosphate. In terms of biological role, promotes RNA polymerase assembly. Latches the N- and C-terminal regions of the beta' subunit thereby facilitating its interaction with the beta and alpha subunits. This is DNA-directed RNA polymerase subunit omega from Rickettsia africae (strain ESF-5).